The chain runs to 424 residues: Hemagglutinin-esterase (424 aa).

Positions M1–S16 are cleaved as a signal peptide. The esterase domain 1 stretch occupies residues F7–G127. Over L17 to I392 the chain is Virion surface. S40 functions as the Nucleophile in the catalytic mechanism. A disulfide bridge connects residues C44 and C65. Residues N54, N89, N153, N236, and N301 are each glycosylated (N-linked (GlcNAc...) asparagine; by host). Disulfide bonds link C113-C162, C197-C276, and C205-C249. Residues L128 to L266 form a receptor binding region. Residues L267–T379 form an esterase domain 2 region. C307 and C312 form a disulfide bridge. Residue N316 is glycosylated (N-linked (GlcNAc...) asparagine; by host). Catalysis depends on charge relay system residues D326 and H329. Residues C347 and C371 are joined by a disulfide bond. N358 carries N-linked (GlcNAc...) asparagine; by host glycosylation. Residues I393–F413 form a helical membrane-spanning segment. The Intravirion portion of the chain corresponds to M414–A424. N417 is a glycosylation site (N-linked (GlcNAc...) asparagine; by host).

Belongs to the influenza type C/coronaviruses hemagglutinin-esterase family. In terms of assembly, homodimer; disulfide-linked. Forms a complex with the M protein in the pre-Golgi. Associates then with S-M complex to form a ternary complex S-M-HE. In terms of processing, N-glycosylated in the host RER.

Its subcellular location is the virion membrane. It localises to the host cell membrane. The catalysed reaction is N-acetyl-9-O-acetylneuraminate + H2O = N-acetylneuraminate + acetate + H(+). It catalyses the reaction N-acetyl-4-O-acetylneuraminate + H2O = N-acetylneuraminate + acetate + H(+). Structural protein that makes short spikes at the surface of the virus. Contains receptor binding and receptor-destroying activities. Mediates de-O-acetylation of N-acetyl-4-O-acetylneuraminic acid, which is probably the receptor determinant recognized by the virus on the surface of erythrocytes and susceptible cells. This receptor-destroying activity is important for virus release as it probably helps preventing self-aggregation and ensures the efficient spread of the progeny virus from cell to cell. May serve as a secondary viral attachment protein for initiating infection, the spike protein being the major one. May become a target for both the humoral and the cellular branches of the immune system. This chain is Hemagglutinin-esterase, found in Bovine coronavirus (strain Ontario) (BCoV).